The chain runs to 275 residues: Transcription factor Ovo-like 2 (275 aa).

The interval 15–101 (SVRSWDELPD…GHLATKQRPV (87 aa)) is disordered. 2 stretches are compositionally biased toward basic and acidic residues: residues 18–29 (SWDELPDEKRAD) and 39–49 (LLHDPPEDCRS). Residues 56–76 (GSGSSSAGEPGGAESSSSPHA) are compositionally biased toward low complexity. Residues 80–89 (ETPEPGDAEG) are compositionally biased toward acidic residues. 4 consecutive C2H2-type zinc fingers follow at residues 119 to 141 (HSCDLCGKGFRLQRMLNRHLKCH), 147 to 169 (HLCTFCGKGFNDTFDLKRHVRTH), 175 to 198 (YKCNVCNKAFTQRCSLESHLKKIH), and 214 to 237 (YVCEDCGYTGPTQEDLYLHVNSAH). At S269 the chain carries Phosphoserine.

This sequence belongs to the krueppel C2H2-type zinc-finger protein family. Interacts (via zinc-finger domains) with CEBPA (via bZIP domain); the interaction inhibits the transcription factor activity of CEBPA and is required to repress adipogenesis. In terms of tissue distribution, expressed in testis, ovary, heart and skeletal muscle. Expressed in the cornea, but absent from the corneal endothelium.

It localises to the nucleus. Its function is as follows. Zinc-finger transcription repressor factor. Plays a critical role in maintaining the identity of epithelial lineages by suppressing epithelial-to mesenchymal transition (EMT) mainly through the repression of ZEB1, an EMT inducer. Positively regulates neuronal differentiation. Suppresses cell cycling and terminal differentiation of keratinocytes by directly repressing MYC and NOTCH1. Important for the correct development of primordial germ cells in embryos. Plays dual functions in thermogenesis and adipogenesis to maintain energy balance. Essential for brown/beige adipose tissue-mediated thermogenesis, is necessary for the development of brown adipocytes. In white adipose tissues, limits adipogenesis by blocking CEBPA binding to its transcriptional targets and inhibiting its transcription factor activity. This Homo sapiens (Human) protein is Transcription factor Ovo-like 2.